Consider the following 408-residue polypeptide: CinA-like protein (408 aa).

The protein belongs to the CinA family.

This chain is CinA-like protein, found in Thermotoga maritima (strain ATCC 43589 / DSM 3109 / JCM 10099 / NBRC 100826 / MSB8).